Reading from the N-terminus, the 467-residue chain is Argininosuccinate lyase (467 aa).

Positions 27, 114, and 159 each coordinate 2-(N(omega)-L-arginino)succinate. The active-site Proton acceptor is the His160. Ser281 functions as the Proton donor in the catalytic mechanism. 2-(N(omega)-L-arginino)succinate is bound by residues Asn289, Tyr321, Gln326, and Lys329.

This sequence belongs to the lyase 1 family. Argininosuccinate lyase subfamily. In terms of assembly, homotetramer.

It catalyses the reaction 2-(N(omega)-L-arginino)succinate = fumarate + L-arginine. It participates in amino-acid biosynthesis; L-arginine biosynthesis; L-arginine from L-ornithine and carbamoyl phosphate: step 3/3. The protein operates within nitrogen metabolism; urea cycle; L-arginine and fumarate from (N(omega)-L-arginino)succinate: step 1/1. This Aquarana catesbeiana (American bullfrog) protein is Argininosuccinate lyase (ASL).